We begin with the raw amino-acid sequence, 171 residues long: 3-hydroxydecanoyl-[acyl-carrier-protein] dehydratase (171 aa).

His-70 is an active-site residue.

It belongs to the thioester dehydratase family. FabA subfamily. Homodimer.

It is found in the cytoplasm. The enzyme catalyses a (3R)-hydroxyacyl-[ACP] = a (2E)-enoyl-[ACP] + H2O. The catalysed reaction is (3R)-hydroxydecanoyl-[ACP] = (2E)-decenoyl-[ACP] + H2O. It catalyses the reaction (2E)-decenoyl-[ACP] = (3Z)-decenoyl-[ACP]. It functions in the pathway lipid metabolism; fatty acid biosynthesis. In terms of biological role, necessary for the introduction of cis unsaturation into fatty acids. Catalyzes the dehydration of (3R)-3-hydroxydecanoyl-ACP to E-(2)-decenoyl-ACP and then its isomerization to Z-(3)-decenoyl-ACP. Can catalyze the dehydratase reaction for beta-hydroxyacyl-ACPs with saturated chain lengths up to 16:0, being most active on intermediate chain length. The sequence is that of 3-hydroxydecanoyl-[acyl-carrier-protein] dehydratase from Mesorhizobium japonicum (strain LMG 29417 / CECT 9101 / MAFF 303099) (Mesorhizobium loti (strain MAFF 303099)).